A 368-amino-acid polypeptide reads, in one-letter code: tRNA-specific 2-thiouridylase MnmA (368 aa).

Residues Gly12 to Ser19 and Met38 contribute to the ATP site. Positions Asn98–Asp100 are interaction with target base in tRNA. Cys103 (nucleophile) is an active-site residue. A disulfide bridge connects residues Cys103 and Cys200. Residue Gly128 participates in ATP binding. An interaction with tRNA region spans residues Lys150–Gln152. Catalysis depends on Cys200, which acts as the Cysteine persulfide intermediate. Positions Arg311–Tyr312 are interaction with tRNA.

It belongs to the MnmA/TRMU family.

Its subcellular location is the cytoplasm. The enzyme catalyses S-sulfanyl-L-cysteinyl-[protein] + uridine(34) in tRNA + AH2 + ATP = 2-thiouridine(34) in tRNA + L-cysteinyl-[protein] + A + AMP + diphosphate + H(+). Catalyzes the 2-thiolation of uridine at the wobble position (U34) of tRNA, leading to the formation of s(2)U34. The protein is tRNA-specific 2-thiouridylase MnmA of Aeromonas hydrophila subsp. hydrophila (strain ATCC 7966 / DSM 30187 / BCRC 13018 / CCUG 14551 / JCM 1027 / KCTC 2358 / NCIMB 9240 / NCTC 8049).